The primary structure comprises 252 residues: Proteasome subunit alpha type-3 (252 aa).

This sequence belongs to the peptidase T1A family. The 26S proteasome consists of a 20S proteasome core and two 19S regulatory subunits. The 20S proteasome core is composed of 28 subunits that are arranged in four stacked rings, resulting in a barrel-shaped structure. The two end rings are each formed by seven alpha subunits, and the two central rings are each formed by seven beta subunits. The catalytic chamber with the active sites is on the inside of the barrel.

It is found in the cytoplasm. The protein resides in the nucleus. Its function is as follows. The proteasome is a multicatalytic proteinase complex which is characterized by its ability to cleave peptides with Arg, Phe, Tyr, Leu, and Glu adjacent to the leaving group at neutral or slightly basic pH. The proteasome has an ATP-dependent proteolytic activity. This Acanthamoeba castellanii (Amoeba) protein is Proteasome subunit alpha type-3.